Here is a 139-residue protein sequence, read N- to C-terminus: MHEWALADAIVRTALDYAQKENASKILAIKVVLGELQDVNAEVVEFAMKELLRGTIGEGAEIIFEEEEAVFRCRNCGHEWKLKEVKDKLDERIREDIHFIPEVVHAFISCPNCGSHDFEVVKGRGVYIAGIKIEKEEGE.

Position 2 (His2) interacts with Ni(2+). Residues Cys73, Cys76, Cys110, and Cys113 each coordinate Zn(2+).

Belongs to the HypA/HybF family.

Functionally, involved in the maturation of [NiFe] hydrogenases. Required for nickel insertion into the metal center of the hydrogenase. The chain is Hydrogenase maturation factor HypA from Pyrococcus abyssi (strain GE5 / Orsay).